The sequence spans 267 residues: Ribosomal RNA small subunit methyltransferase A (267 aa).

Residues Asn13, Leu15, Gly39, Glu59, Asp87, and Asn106 each contribute to the S-adenosyl-L-methionine site.

Belongs to the class I-like SAM-binding methyltransferase superfamily. rRNA adenine N(6)-methyltransferase family. RsmA subfamily.

The protein localises to the cytoplasm. The catalysed reaction is adenosine(1518)/adenosine(1519) in 16S rRNA + 4 S-adenosyl-L-methionine = N(6)-dimethyladenosine(1518)/N(6)-dimethyladenosine(1519) in 16S rRNA + 4 S-adenosyl-L-homocysteine + 4 H(+). In terms of biological role, specifically dimethylates two adjacent adenosines (A1518 and A1519) in the loop of a conserved hairpin near the 3'-end of 16S rRNA in the 30S particle. May play a critical role in biogenesis of 30S subunits. The chain is Ribosomal RNA small subunit methyltransferase A from Sulfurimonas denitrificans (strain ATCC 33889 / DSM 1251) (Thiomicrospira denitrificans (strain ATCC 33889 / DSM 1251)).